A 571-amino-acid chain; its full sequence is Proline--tRNA ligase (571 aa).

This sequence belongs to the class-II aminoacyl-tRNA synthetase family. ProS type 1 subfamily. As to quaternary structure, homodimer.

The protein localises to the cytoplasm. It carries out the reaction tRNA(Pro) + L-proline + ATP = L-prolyl-tRNA(Pro) + AMP + diphosphate. Functionally, catalyzes the attachment of proline to tRNA(Pro) in a two-step reaction: proline is first activated by ATP to form Pro-AMP and then transferred to the acceptor end of tRNA(Pro). As ProRS can inadvertently accommodate and process non-cognate amino acids such as alanine and cysteine, to avoid such errors it has two additional distinct editing activities against alanine. One activity is designated as 'pretransfer' editing and involves the tRNA(Pro)-independent hydrolysis of activated Ala-AMP. The other activity is designated 'posttransfer' editing and involves deacylation of mischarged Ala-tRNA(Pro). The misacylated Cys-tRNA(Pro) is not edited by ProRS. In Ligilactobacillus salivarius (strain UCC118) (Lactobacillus salivarius), this protein is Proline--tRNA ligase.